A 90-amino-acid polypeptide reads, in one-letter code: UPF0298 protein BLi01717/BL02989 (90 aa).

Belongs to the UPF0298 family.

It localises to the cytoplasm. The chain is UPF0298 protein BLi01717/BL02989 from Bacillus licheniformis (strain ATCC 14580 / DSM 13 / JCM 2505 / CCUG 7422 / NBRC 12200 / NCIMB 9375 / NCTC 10341 / NRRL NRS-1264 / Gibson 46).